The primary structure comprises 412 residues: MKGIVLVMDGMGDRPLKEFDNQTPLQAANTPNMDEMAKNGITGIMDSIAPGIIPGSDTAHLSILGYDPYEVYTGRGPFEAAGVGVDVIPGDIAFRCNFSTADENGIVTDRRAGRIREGTHEIVEVLNTMVLEDYPDIKIIFKESTGHRAVLVLRGEGLSDKVSDADPKVEGNKPKEVIPLDDSVEAKKTADILNKLVVKSYEMIKDHPVNLERIENNEPPANIIIPRGAGEVPVVEALNDKYEVNSACIAETGLIMGIGRFAGMDIIEMEDVTGGIDTNLENIRDTIIDQVKNSDHDFFLINIDGADEAGHDGQAVEKRDFIEKVDRVVMSELKKLEDVYIFLTADHSTPISVLNHSGDPVPVIITGPEVRVDDVCEYSEVAVAKGGLCRIRGADVMNIMMDLMNYAHKFGA.

Belongs to the BPG-independent phosphoglycerate mutase family. A-PGAM subfamily.

The catalysed reaction is (2R)-2-phosphoglycerate = (2R)-3-phosphoglycerate. It functions in the pathway carbohydrate degradation; glycolysis; pyruvate from D-glyceraldehyde 3-phosphate: step 3/5. Its function is as follows. Catalyzes the interconversion of 2-phosphoglycerate and 3-phosphoglycerate. This Methanobrevibacter smithii (strain ATCC 35061 / DSM 861 / OCM 144 / PS) protein is 2,3-bisphosphoglycerate-independent phosphoglycerate mutase.